Here is a 443-residue protein sequence, read N- to C-terminus: Ribosomal protein uS12 methylthiotransferase RimO (443 aa).

The 111-residue stretch at proline 8–proline 118 folds into the MTTase N-terminal domain. [4Fe-4S] cluster-binding residues include cysteine 17, cysteine 53, cysteine 82, cysteine 151, cysteine 155, and cysteine 158. In terms of domain architecture, Radical SAM core spans leucine 137–alanine 375. The region spanning glutamine 378 to isoleucine 443 is the TRAM domain.

It belongs to the methylthiotransferase family. RimO subfamily. The cofactor is [4Fe-4S] cluster.

The protein resides in the cytoplasm. The catalysed reaction is L-aspartate(89)-[ribosomal protein uS12]-hydrogen + (sulfur carrier)-SH + AH2 + 2 S-adenosyl-L-methionine = 3-methylsulfanyl-L-aspartate(89)-[ribosomal protein uS12]-hydrogen + (sulfur carrier)-H + 5'-deoxyadenosine + L-methionine + A + S-adenosyl-L-homocysteine + 2 H(+). Functionally, catalyzes the methylthiolation of an aspartic acid residue of ribosomal protein uS12. The protein is Ribosomal protein uS12 methylthiotransferase RimO of Pseudomonas putida (strain ATCC 700007 / DSM 6899 / JCM 31910 / BCRC 17059 / LMG 24140 / F1).